Here is a 185-residue protein sequence, read N- to C-terminus: Intraflagellar transport protein 22 homolog (185 aa).

GTP contacts are provided by residues 10–17, 63–67, and 123–126; these read GPCESGKT, DCGGD, and HKPG.

This sequence belongs to the small GTPase superfamily. Rab family. In terms of assembly, component of the IFT complex B, at least composed of IFT20, IFT22, IFT25, IFT27, IFT46, IFT52, TRAF3IP1/IFT54, IFT57, IFT74, IFT80, IFT81, and IFT88. Interacts with IFT88. Interacts with CFAP61.

It localises to the cell projection. It is found in the cilium. In terms of biological role, small GTPase-like component of the intraflagellar transport (IFT) complex B. In Bos taurus (Bovine), this protein is Intraflagellar transport protein 22 homolog (IFT22).